The following is a 562-amino-acid chain: Adenylate kinase isoenzyme 5 (562 aa).

Adenylate kinase stretches follow at residues 133 to 316 (KIIL…VAVD) and 377 to 559 (KIIF…TAID). 142–147 (GSGKGT) contacts ATP. The interval 162-193 (SVGELLRKKIHSASSNRKWSLIAKIITNGELA) is NMP 1. Residues R168, 191–193 (ELA), 219–222 (GFPR), and Q226 each bind AMP. Residues 256-266 (KRAEQQGRPDD) are LID 1. ATP is bound at residue R257. AMP contacts are provided by R263 and R274. ATP is bound at residue 386 to 391 (GSGKGT). An NMP 2 region spans residues 406-435 (STGELLRQELTSESERSKLIRDIMERGDLV). AMP-binding positions include T407, R412, 433–435 (DLV), 462–465 (GYPR), and Q469. The segment at 499 to 509 (QRSQSSQRGED) is LID 2. Position 500 (R500) interacts with ATP. R506 and R517 together coordinate AMP. G545 provides a ligand contact to ATP.

The protein belongs to the adenylate kinase family. Monomer. Interacts with YWHAZ. Brain specific.

The protein resides in the cytoplasm. It catalyses the reaction AMP + ATP = 2 ADP. The catalysed reaction is a 2'-deoxyribonucleoside 5'-diphosphate + ATP = a 2'-deoxyribonucleoside 5'-triphosphate + ADP. The enzyme catalyses a ribonucleoside 5'-diphosphate + ATP = a ribonucleoside 5'-triphosphate + ADP. Nucleoside monophosphate (NMP) kinase that catalyzes the reversible transfer of the terminal phosphate group between nucleoside triphosphates and monophosphates. Active on AMP and dAMP with ATP as a donor. When GTP is used as phosphate donor, the enzyme phosphorylates AMP, CMP, and to a small extent dCMP. Also displays broad nucleoside diphosphate kinase activity. The polypeptide is Adenylate kinase isoenzyme 5 (Ak5) (Mus musculus (Mouse)).